The following is a 684-amino-acid chain: MSKKGTIGVTSDNIFPVIKKFLYSDHKIFLREIVSNAVDATQKLKTLTSVGEFKGETGDLRVTVSVDEVARTITVSDRGVGMTEEEVEKYINQIAFSSAEEFLEKYKDDKAAIIGHFGLGFYSAFMVSERVDVITRSFREDATAVKWSCDGSPEYTLEPADKADRGTDIVMHIDEENSEFLKKEKIEGLLGKYCKFLTVPIIFGKKQEWKDGKMQDTDEDNQINDTHPAWTKKPADLKDEDYKEFYRSLYPMSEEPLFWIHLNVDYPFNLTGILYFPKIKNNLDLQRNKIQLYCNQVYVTDEVQGIVPDFLTLLHGVIDSPDIPLNVSRSYLQSDANVKKISSHITKKVADRLEEIFKNDRPTFEEKWDSLKLFVEYGMLTDEKFYERAAKFFLFTDMDGHKYTFDEYRTLVEGVQTDKDGQVVYLYATDKHGQYSHVKRASDKGYSVMLLDGQLDPHIVSLLEQKLEKTHFVRVDSDTINNLIRKEERAEVKLSDTERATLVKLFEARLPRDEKKHFNVAFESLGAEGEAILITQAEFMRRMRDMAQLQPGMSFYGELPDSYNLVLNTDHPLIDKVLSGEKESVEPSLTELRAKIAELKTEEAKLLDEEKGKKPEEIPVATKEAKENNAVEQAKTEGSINDQLTKYAQDNELIGQLIDLALLGSGLLTGEALAEFIRRSQRLL.

The tract at residues 1 to 329 (MSKKGTIGVT…SPDIPLNVSR (329 aa)) is a; substrate-binding. The tract at residues 330–548 (SYLQSDANVK…FMRRMRDMAQ (219 aa)) is b. The interval 549 to 684 (LQPGMSFYGE…EFIRRSQRLL (136 aa)) is c.

This sequence belongs to the heat shock protein 90 family. As to quaternary structure, homodimer.

It localises to the cytoplasm. In terms of biological role, molecular chaperone. Has ATPase activity. The polypeptide is Chaperone protein HtpG (Porphyromonas gingivalis (strain ATCC 33277 / DSM 20709 / CIP 103683 / JCM 12257 / NCTC 11834 / 2561)).